A 467-amino-acid polypeptide reads, in one-letter code: 3-isopropylmalate dehydratase large subunit (467 aa).

Residues Cys-348, Cys-409, and Cys-412 each contribute to the [4Fe-4S] cluster site.

This sequence belongs to the aconitase/IPM isomerase family. LeuC type 1 subfamily. As to quaternary structure, heterodimer of LeuC and LeuD. [4Fe-4S] cluster serves as cofactor.

The enzyme catalyses (2R,3S)-3-isopropylmalate = (2S)-2-isopropylmalate. It participates in amino-acid biosynthesis; L-leucine biosynthesis; L-leucine from 3-methyl-2-oxobutanoate: step 2/4. In terms of biological role, catalyzes the isomerization between 2-isopropylmalate and 3-isopropylmalate, via the formation of 2-isopropylmaleate. This chain is 3-isopropylmalate dehydratase large subunit, found in Magnetococcus marinus (strain ATCC BAA-1437 / JCM 17883 / MC-1).